The sequence spans 767 residues: Transient receptor potential cation channel subfamily V member 6 (767 aa).

Residues M1–P33 are disordered. Residues M1–P366 are Cytoplasmic-facing. ANK repeat units follow at residues I84–Q114, M118–F147, and E156–A185. An interaction with calmodulin region spans residues E133–P143. A phosphotyrosine; by SRC mark is found at Y201 and Y202. 3 ANK repeats span residues Y202–A231, L235–N276, and Q278–W307. Residues Y367 to V387 form a helical membrane-spanning segment. At Y388 to R424 the chain is on the extracellular side. N397 carries an N-linked (GlcNAc...) asparagine glycan. The chain crosses the membrane as a helical span at residues L425 to F447. Residues R448–G462 are Cytoplasmic-facing. The chain crosses the membrane as a helical span at residues P463–R482. Residues L483–G488 are Extracellular-facing. The chain crosses the membrane as a helical span at residues E489 to A508. Residues R509–D528 lie on the Cytoplasmic side of the membrane. Residues L529 to F551 traverse the membrane as a helical segment. The Extracellular segment spans residues Q552 to D564. An intramembrane region (pore-forming) is located at residues Y565 to A584. Residues I580–A584 carry the Selectivity filter motif. D581 serves as a coordination point for Ca(2+). Residues N585–S595 are Extracellular-facing. The helical transmembrane segment at I596 to M616 threads the bilayer. Residues M617–I767 are Cytoplasmic-facing. Residues V637 to V641 are interaction with S100A10. The segment at A689 to E707 is interaction with calmodulin.

The protein belongs to the transient receptor (TC 1.A.4) family. TrpV subfamily. TRPV6 sub-subfamily. In terms of assembly, homotetramer. Probably also forms heterotetramers with TRPV5. Interacts with TRPV5. Interacts with S100A10 and probably with the ANAX2-S100A10 heterotetramer. The interaction with S100A10 is required for the trafficking to the plasma membrane. Interacts with calmodulin. Interacts with BSPRY. Interacts with TCAF1 and TCAF2. In terms of processing, glycosylated. Phosphorylation at Tyr-201 and Tyr-202 by SRC leads to an increased calcium influx through the channel. Probably dephosphorylated at these sites by PTPN1. Expressed in duodenum, proximal jejunum, cecum, and colon.

The protein localises to the cell membrane. It carries out the reaction Ca(2+)(in) = Ca(2+)(out). Its function is as follows. Calcium selective cation channel that mediates Ca(2+) uptake in various tissues, including the intestine. Important for normal Ca(2+) ion homeostasis in the body, including bone and skin. The channel is activated by low internal calcium level, probably including intracellular calcium store depletion, and the current exhibits an inward rectification. Inactivation includes both a rapid Ca(2+)-dependent and a slower Ca(2+)-calmodulin-dependent mechanism; the latter may be regulated by phosphorylation. In vitro, is slowly inhibited by Mg(2+) in a voltage-independent manner. Heteromeric assembly with TRPV5 seems to modify channel properties. TRPV5-TRPV6 heteromultimeric concatemers exhibit voltage-dependent gating. The sequence is that of Transient receptor potential cation channel subfamily V member 6 (Trpv6) from Rattus norvegicus (Rat).